A 502-amino-acid polypeptide reads, in one-letter code: Alpha-globin transcription factor CP2 (502 aa).

The region spanning 63 to 300 (EILPFQYVLC…SPGFNSSHSS (238 aa)) is the Grh/CP2 DB domain. The DNA-binding stretch occupies residues 133-386 (EHQQLEGWRW…LFNALKGRMV (254 aa)). Over residues 241-265 (KGADRKQKIDREKMEKRTPHEKEKY) the composition is skewed to basic and acidic residues. 2 disordered regions span residues 241–268 (KGADRKQKIDREKMEKRTPHEKEKYQPS) and 294–326 (FNSSHSSFSLGEGNGSPNHQPEPPPPVTDNLLP). S353 is subject to Phosphoserine.

The protein belongs to the grh/CP2 family. CP2 subfamily. Binds to DNA as a dimer. Interacts with UBP1 and PIAS1, and is probably part of a complex containing TFCP2, UBP1 and PIAS1. Component of the SSP (stage selector protein) complex, which appears to be a heteromer of TFCP2 and 2 copies of NFE4.

It is found in the nucleus. Its function is as follows. Binds a variety of cellular promoters including fibrinogen, alpha-globin promoters. Activation of the alpha-globin promoter in erythroid cells is via synergistic interaction with UBP1. Functions as part of the SSP (stage selector protein) complex. Facilitates the interaction of the gamma-globin genes with enhancer elements contained in the locus control region in fetal erythroid cells. Interacts by binding to the stage selector element (SSE) in the proximal gamma-globin promoter. The protein is Alpha-globin transcription factor CP2 (Tfcp2) of Mus musculus (Mouse).